Here is a 323-residue protein sequence, read N- to C-terminus: Large ribosomal subunit protein uL10x (323 aa).

Residues Asp287–Glu323 are disordered. Position 308 is a phosphoserine (Ser308). Positions Ser308–Glu323 are enriched in acidic residues. Tyr313 carries the post-translational modification Phosphotyrosine.

This sequence belongs to the universal ribosomal protein uL10 family. P0 forms a pentameric complex by interaction with dimers of P1 and P2.

Its function is as follows. Ribosomal protein P0 is the functional equivalent of E.coli protein L10. This chain is Large ribosomal subunit protein uL10x (RPP0C), found in Arabidopsis thaliana (Mouse-ear cress).